The chain runs to 87 residues: UPF0297 protein Sca_1229 (87 aa).

Belongs to the UPF0297 family.

The sequence is that of UPF0297 protein Sca_1229 from Staphylococcus carnosus (strain TM300).